The chain runs to 121 residues: Dihydroneopterin aldolase (121 aa).

Substrate contacts are provided by glutamate 16 and methionine 111.

Belongs to the archaeal dihydroneopterin aldolase family. Homotetramer.

It carries out the reaction 7,8-dihydroneopterin = 6-hydroxymethyl-7,8-dihydropterin + glycolaldehyde. It participates in cofactor biosynthesis; 5,6,7,8-tetrahydromethanopterin biosynthesis. Functionally, catalyzes the conversion of 7,8-dihydroneopterin (H2Neo) to 6-hydroxymethyl-7,8-dihydropterin (6-HMD). This is Dihydroneopterin aldolase from Methanopyrus kandleri (strain AV19 / DSM 6324 / JCM 9639 / NBRC 100938).